Consider the following 266-residue polypeptide: 15-hydroxyprostaglandin dehydrogenase [NAD(+)] (266 aa).

NAD(+) contacts are provided by residues 12-20 (GAAQGIGRA), 36-37 (DW), 63-65 (CDV), and Asn-91. Residues Ser-138 and Gln-148 each coordinate substrate. Residue Tyr-151 is the Proton acceptor of the active site. Residues 151–155 (YCASK) and 186–188 (VDT) each bind NAD(+).

This sequence belongs to the short-chain dehydrogenases/reductases (SDR) family. In terms of assembly, homodimer.

It is found in the cytoplasm. It carries out the reaction prostaglandin E2 + NAD(+) = 15-oxoprostaglandin E2 + NADH + H(+). It catalyses the reaction (15S)-hydroxy-(5Z,8Z,11Z,13E)-eicosatetraenoate + NAD(+) = 15-oxo-(5Z,8Z,11Z,13E)-eicosatetraenoate + NADH + H(+). The catalysed reaction is (11R)-hydroxy-(5Z,8Z,12E,14Z)-eicosatetraenoate + NAD(+) = 11-oxo-(5Z,8Z,12E,14Z)-eicosatetraenoate + NADH + H(+). The enzyme catalyses lipoxin A4 + NAD(+) = 15-oxo-(5S,6R)-dihydroxy-(7E,9E,11Z,13E)-eicosatetraenoate + NADH + H(+). It carries out the reaction 15-oxo-(5S,6R)-dihydroxy-(7E,9E,11Z)-eicosatrienoate + NADH + H(+) = (5S,6R,15S)-trihydroxy-(7E,9E,11Z)-eicosatrienoate + NAD(+). It catalyses the reaction prostaglandin A1 + NAD(+) = 15-oxo-prostaglandin A1 + NADH + H(+). The catalysed reaction is prostaglandin E1 + NAD(+) = 15-oxoprostaglandin E1 + NADH + H(+). The enzyme catalyses 14-hydroxy-(4Z,7Z,10Z,12E,16Z,19Z)-docosahexaenoate + NAD(+) = 14-oxo-(4Z,7Z,10Z,12E,16Z,19Z)-docosahexaenoate + NADH + H(+). It carries out the reaction resolvin E1 + NAD(+) = 18-oxo-resolvin E1 + NADH + H(+). It catalyses the reaction resolvin D1 + NAD(+) = 8-oxoresolvin D1 + NADH + H(+). The catalysed reaction is resolvin D1 + NAD(+) = 17-oxoresolvin D1 + NADH + H(+). The enzyme catalyses resolvin D2 + NAD(+) = 7-oxoresolvin D2 + NADH + H(+). It carries out the reaction resolvin D2 + NAD(+) = 16-oxoresolvin D2 + NADH + H(+). Its function is as follows. Catalyzes the NAD-dependent dehydrogenation (oxidation) of a broad array of hydroxylated polyunsaturated fatty acids (mainly eicosanoids and docosanoids, including prostaglandins, lipoxins and resolvins), yielding their corresponding keto (oxo) metabolites. Decreases the levels of the pro-proliferative prostaglandins such as prostaglandin E2 (whose activity is increased in cancer because of an increase in the expression of cyclooxygenase 2) and generates oxo-fatty acid products that can profoundly influence cell function by abrogating pro-inflammatory cytokine expression. Converts resolvins E1, D1 and D2 to their oxo products, which represents a mode of resolvin inactivation. Resolvin E1 plays important roles during the resolution phase of acute inflammation, while resolvins D1 and D2 have a unique role in obesity-induced adipose inflammation. In Bos taurus (Bovine), this protein is 15-hydroxyprostaglandin dehydrogenase [NAD(+)] (HPGD).